The sequence spans 194 residues: Probable nicotinate-nucleotide adenylyltransferase (194 aa).

It belongs to the NadD family.

The catalysed reaction is nicotinate beta-D-ribonucleotide + ATP + H(+) = deamido-NAD(+) + diphosphate. Its pathway is cofactor biosynthesis; NAD(+) biosynthesis; deamido-NAD(+) from nicotinate D-ribonucleotide: step 1/1. In terms of biological role, catalyzes the reversible adenylation of nicotinate mononucleotide (NaMN) to nicotinic acid adenine dinucleotide (NaAD). The chain is Probable nicotinate-nucleotide adenylyltransferase from Christiangramia forsetii (strain DSM 17595 / CGMCC 1.15422 / KT0803) (Gramella forsetii).